The sequence spans 468 residues: Pituitary adenylate cyclase-activating polypeptide type I receptor (468 aa).

The signal sequence occupies residues 1-20 (MAGVVHVSLAALLLLPMAPA). Residues 21–152 (MHSDCIFKKE…TGDQDYYYLS (132 aa)) lie on the Extracellular side of the membrane. Disulfide bonds link C34/C63, C54/C118, and C77/C134. 3 N-linked (GlcNAc...) asparagine glycosylation sites follow: N48, N60, and N117. The important for ADCYAP1/PACAP ligand binding and specificity stretch occupies residues 125–139 (EPFPHYFDACGFDEY). A helical transmembrane segment spans residues 153–177 (VKALYTVGYSTSLVTLTTAMVILCR). The Cytoplasmic portion of the chain corresponds to 178–187 (FRKLHCTRNF). The chain crosses the membrane as a helical span at residues 188–208 (IHMNLFVSFMLRAISVFIKDW). Residues 209–223 (ILYAEQDSNHCFIST) lie on the Extracellular side of the membrane. A helical membrane pass occupies residues 224-249 (VECKAVMVFFHYCVVSNYFWLFIEGL). The cysteines at positions 226 and 296 are disulfide-linked. At 250-267 (YLFTLLVETFFPERRYFY) the chain is on the cytoplasmic side. A helical membrane pass occupies residues 268 to 290 (WYTIIGWGTPTVCVTVWATLRLY). Over 291-302 (FDDTGCWDMNDS) the chain is Extracellular. N300 is a glycosylation site (N-linked (GlcNAc...) asparagine). Residues 303–329 (TALWWVIKGPVVGSIMVNFVLFIGIIV) form a helical membrane-spanning segment. The Cytoplasmic portion of the chain corresponds to 330–347 (ILVQKLQSPDMGGNESSI). A helical membrane pass occupies residues 348–374 (YLRLARSTLLLIPLFGIHYTVFAFSPE). N375 carries an N-linked (GlcNAc...) asparagine glycan. Topologically, residues 375 to 379 (NVSKR) are extracellular. A helical transmembrane segment spans residues 380–403 (ERLVFELGLGSFQGFVVAVLYCFL). The Cytoplasmic portion of the chain corresponds to 404–468 (NGEVQAEIKR…SGLPADNLAT (65 aa)). Phosphoserine is present on residues S434 and S447.

This sequence belongs to the G-protein coupled receptor 2 family. Interacts with maxadilan, a vasodilator peptide from Lutzomyia longipalpis saliva; the interaction results in ADCYAP1R1 activation. In terms of tissue distribution, most abundant in the brain, low expression in the lung, liver, thymus, spleen, pancreas and placenta.

The protein localises to the cell membrane. Its activity is regulated as follows. Several synthetic peptides derived from maxadilan, a vasodilator peptide from Lutzomyia longipalpis saliva, act as antagonists for ADCYAP1R1. G protein-coupled receptor activated by the neuropeptide pituitary adenylate cyclase-activating polypeptide (ADCYAP1/PACAP). Binds both PACAP27 and PACAP38 bioactive peptides. Ligand binding causes a conformation change that triggers signaling via guanine nucleotide-binding proteins (G proteins) and modulates the activity of downstream effectors. Activates cAMP-dependent pathway. May regulate the release of adrenocorticotropin, luteinizing hormone, growth hormone, prolactin, epinephrine, and catecholamine. May play a role in spermatogenesis and sperm motility. Causes smooth muscle relaxation and secretion in the gastrointestinal tract. In Homo sapiens (Human), this protein is Pituitary adenylate cyclase-activating polypeptide type I receptor.